A 423-amino-acid polypeptide reads, in one-letter code: 26S proteasome regulatory subunit 6B homolog (423 aa).

207 to 214 (GPPGTGKT) serves as a coordination point for ATP.

The protein belongs to the AAA ATPase family.

Its subcellular location is the cytoplasm. It is found in the nucleus. Functionally, the 26S proteasome is involved in the ATP-dependent degradation of ubiquitinated proteins. The regulatory (or ATPase) complex confers ATP dependency and substrate specificity to the 26S complex. This is 26S proteasome regulatory subunit 6B homolog (tbpA) from Aspergillus niger.